Here is a 214-residue protein sequence, read N- to C-terminus: Glycerol-3-phosphate acyltransferase (214 aa).

The next 5 helical transmembrane spans lie at 4-24 (LIVAVVAYLIGSVSFAVIVSA), 52-72 (AAILTLIGDAFKGWLPVWFVV), 82-102 (DTSVAIAAVAVFLGHLYPAFF), 118-138 (LAINPILGVATLLTWLIVAFF), and 159-179 (FLFGPHIIALAIVVMSSLLVW).

This sequence belongs to the PlsY family. As to quaternary structure, probably interacts with PlsX.

It is found in the cell inner membrane. The enzyme catalyses an acyl phosphate + sn-glycerol 3-phosphate = a 1-acyl-sn-glycero-3-phosphate + phosphate. It participates in lipid metabolism; phospholipid metabolism. Its function is as follows. Catalyzes the transfer of an acyl group from acyl-phosphate (acyl-PO(4)) to glycerol-3-phosphate (G3P) to form lysophosphatidic acid (LPA). This enzyme utilizes acyl-phosphate as fatty acyl donor, but not acyl-CoA or acyl-ACP. This is Glycerol-3-phosphate acyltransferase from Paraburkholderia xenovorans (strain LB400).